The following is a 249-amino-acid chain: Metal-staphylopine import system ATP-binding protein CntF (249 aa).

The 243-residue stretch at 2–244 folds into the ABC transporter domain; sequence IKIKDVEKSY…DNAYTRELIE (243 aa). An ATP-binding site is contributed by 42–49; the sequence is GESGSGKS.

Belongs to the ABC transporter superfamily. In terms of assembly, the complex is composed of two ATP-binding proteins (CntD and CntF), two transmembrane proteins (CntB and CntC) and a solute-binding protein (CntA).

It localises to the cell membrane. With respect to regulation, nickel/cobalt import is reduced in the presence of zinc. In terms of biological role, part of the ABC transporter complex CntABCDF (Opp1) involved in the uptake of metal in complex with the metallophore staphylopine (StP). Involved in the import of divalent metals ions such as nickel, cobalt and zinc. Probably responsible for energy coupling to the transport system. Plays a major role in nickel/cobalt import in zinc-depleted conditions. Contributes to virulence. Required for full urease activity in vitro. The sequence is that of Metal-staphylopine import system ATP-binding protein CntF from Staphylococcus aureus (strain NCTC 8325 / PS 47).